The primary structure comprises 241 residues: Ubiquinone biosynthesis O-methyltransferase (241 aa).

S-adenosyl-L-methionine-binding residues include arginine 42, glycine 62, aspartate 83, and methionine 127.

This sequence belongs to the methyltransferase superfamily. UbiG/COQ3 family.

It catalyses the reaction a 3-demethylubiquinol + S-adenosyl-L-methionine = a ubiquinol + S-adenosyl-L-homocysteine + H(+). The catalysed reaction is a 3-(all-trans-polyprenyl)benzene-1,2-diol + S-adenosyl-L-methionine = a 2-methoxy-6-(all-trans-polyprenyl)phenol + S-adenosyl-L-homocysteine + H(+). It functions in the pathway cofactor biosynthesis; ubiquinone biosynthesis. Functionally, O-methyltransferase that catalyzes the 2 O-methylation steps in the ubiquinone biosynthetic pathway. This chain is Ubiquinone biosynthesis O-methyltransferase, found in Pectobacterium atrosepticum (strain SCRI 1043 / ATCC BAA-672) (Erwinia carotovora subsp. atroseptica).